The sequence spans 485 residues: Protein hunchback (485 aa).

The segment at 1–77 (TSSTARKTPE…EEDDDIRTPK (77 aa)) is disordered. The span at 16–37 (QDQNQLLKTPIQTNGNQQSTFD) shows a compositional bias: polar residues. Over residues 59 to 72 (ADVDDENDAEEDDD) the composition is skewed to acidic residues. C2H2-type zinc fingers lie at residues 87-109 (YKCKQCDFIAVTKLSFWEHNRIH), 116-138 (LKCQKCPFITEYKHHLEYHLRNH), 144-166 (FQCKQCNYSCVNKSMLNSHMKSH), and 172-196 (YRCKDCNYATKYCHSLKLHLRKYSH). Disordered stretches follow at residues 229 to 270 (KDEG…PPSS), 318 to 361 (NGWQ…QVKH), and 398 to 422 (PKPVQLQLPTSSTTTPLKTTSEDDS). A compositionally biased stretch (polar residues) spans 257-270 (NFEQSQHVPTPPSS). Positions 325–335 (NCNEEETPEKE) are enriched in acidic residues. Residues 345 to 358 (DLSSNPSTPSTVSQ) show a composition bias toward polar residues. Positions 402 to 416 (QLQLPTSSTTTPLKT) are enriched in low complexity. C2H2-type zinc fingers lie at residues 432–454 (YECKFCDISFKHAVLYTIHMGYH) and 460–484 (FKCNACGKKCEDRVAFFLHIARDAH).

This sequence belongs to the hunchback C2H2-type zinc-finger protein family.

It localises to the nucleus. Gap class segmentation protein that controls development of head structures. The sequence is that of Protein hunchback (hb) from Clogmia albipunctata (Mothmidge).